Reading from the N-terminus, the 536-residue chain is Phosphoenolpyruvate carboxykinase (ATP) (536 aa).

Residues Arg-63, Tyr-203, and Lys-209 each coordinate substrate. ATP contacts are provided by residues Lys-209, His-228, and 244–252 (GLSGTGKTT). Residues Lys-209 and His-228 each coordinate Mn(2+). Mn(2+) is bound at residue Asp-265. Residues Glu-293, Arg-329, 445–446 (RI), and Thr-451 each bind ATP. A substrate-binding site is contributed by Arg-329.

This sequence belongs to the phosphoenolpyruvate carboxykinase (ATP) family. As to quaternary structure, monomer. Mn(2+) serves as cofactor.

It is found in the cytoplasm. It catalyses the reaction oxaloacetate + ATP = phosphoenolpyruvate + ADP + CO2. Its pathway is carbohydrate biosynthesis; gluconeogenesis. Functionally, involved in the gluconeogenesis. Catalyzes the conversion of oxaloacetate (OAA) to phosphoenolpyruvate (PEP) through direct phosphoryl transfer between the nucleoside triphosphate and OAA. The chain is Phosphoenolpyruvate carboxykinase (ATP) from Colwellia psychrerythraea (strain 34H / ATCC BAA-681) (Vibrio psychroerythus).